Reading from the N-terminus, the 261-residue chain is Undecaprenyl-diphosphatase (261 aa).

The next 8 membrane-spanning stretches (helical) occupy residues 9 to 31 (ALLLGVVEGLTEFLPVSSTGHLT), 46 to 66 (FLKTFLVAIQLGAILAVLLLY), 80 to 100 (IAVAFVPTGVIGFLFYPLIKG), 102 to 122 (ILGNDAVVAFFLFFVGAVLLF), 137 to 157 (ALPLARVAWIGVFQGLAALFP), 180 to 200 (AEFSFLLALPTMFAAVGYDLW), 209 to 229 (GGWSLLLLGFLAALVTALVTV), and 240 to 260 (GFRPFALYRMALAAVYAFFFL).

The protein belongs to the UppP family.

It is found in the cell inner membrane. It carries out the reaction di-trans,octa-cis-undecaprenyl diphosphate + H2O = di-trans,octa-cis-undecaprenyl phosphate + phosphate + H(+). Functionally, catalyzes the dephosphorylation of undecaprenyl diphosphate (UPP). Confers resistance to bacitracin. The chain is Undecaprenyl-diphosphatase from Thermus thermophilus (strain ATCC 27634 / DSM 579 / HB8).